A 312-amino-acid chain; its full sequence is uncharacterized protein (312 aa).

The next 6 helical transmembrane spans lie at Leu-9–Ile-29, Leu-115–Ile-135, Ile-187–Thr-207, Ile-224–Phe-244, Ile-264–Phe-284, and Met-292–Leu-312.

The protein localises to the cell membrane. This is an uncharacterized protein from Methanocaldococcus jannaschii (strain ATCC 43067 / DSM 2661 / JAL-1 / JCM 10045 / NBRC 100440) (Methanococcus jannaschii).